Consider the following 431-residue polypeptide: Glutamate--tRNA ligase 1 (431 aa).

Positions 6 to 16 match the 'HIGH' region motif; the sequence is PSPTGDMHIGN. The 'KMSKS' region signature appears at 235-239; the sequence is KMSKR. Lysine 238 contacts ATP.

Belongs to the class-I aminoacyl-tRNA synthetase family. Glutamate--tRNA ligase type 1 subfamily. As to quaternary structure, monomer.

The protein resides in the cytoplasm. The enzyme catalyses tRNA(Glu) + L-glutamate + ATP = L-glutamyl-tRNA(Glu) + AMP + diphosphate. In terms of biological role, catalyzes the attachment of glutamate to tRNA(Glu) in a two-step reaction: glutamate is first activated by ATP to form Glu-AMP and then transferred to the acceptor end of tRNA(Glu). The protein is Glutamate--tRNA ligase 1 of Campylobacter jejuni subsp. jejuni serotype O:2 (strain ATCC 700819 / NCTC 11168).